The chain runs to 1452 residues: MEGGEELFRVSSARLSSSNVWRNSAMDVFSRSSREADDEEALKWAALEKLPTYLRIRRGILTEEEGQSREVDITKLDLVERRNLLERLIKITDEDNEKFLLKLKERIDRVGLDLPTIEVRFEHLSVDAEARVGSRALPTVFNFTVNILEDFLNYLHILPNRKQPLPILHDVSGIIKPGRMTLLLGPPSSGKTTLLLALAGKLDKDLKVSGRVTYNGHDMNEFVAQRSSAYISQYDLHIGEMTVRETLAFSARCQGVGAKYEILAELSRREKEANIKPDPDVDIFMKAAWNEGQEANVVTDYTLKILGLEICADTIVGDEMIPGISGGQRKRLTTGEMMVGPARALFMDEISTGLDSSTTYQIVNSIRQSIHILQGTAVISLLQPAPETYDLFDDIILLSDGQIVYQGPRENVLEFFEYMGFICPERKGVADFLQEVTSRKDQEQYWARREESYKFITVREFSEAFQAFHIGRKLGDELAVPFDKSKSHPAALTTKRYGVSKKELLKACTAREYLLMKRNSFVYIFKMIQLTLMASITMTLFLRTEMHRNTTIDGAVFLGALFYALIMIMFNGFSELALSIMKLPSFYKHRDLLFFPPWAYALPTWILKIPITLVEVAIWVCMTYYVIGFEADVGRFFKQLLLLICVNQMASGLFRLMGALGRNIIVANTFGSFVLLTVLVMGGFVLSRDDVKKWWIWGYWISPMMYAQNAIAVNEFLGKSWAHVPPNSTSTETLGVSFLKSRGIFPDARWYWIGAGALIGYVFLFNFLFAVALAYLNPFGKPQAVLSEETVAERNASKRGEVIELSSLGKSSSEKGNDVRRSASSRSMSSRVGSITAADLSKRRGMILPFEPLSITFDDIRYAVDMPQEMKAQGFTEDRLELLRGVSGAFRPGVLTALMGVSGAGKTTLMDVLAGRKTGGYIDGTISISGYPKQQETFARIAGYCEQTDIHSPHVTVYESLQFSAWLRLPREVDTATRKMFIEEVMELIELIPLRDALVGLPGVNGLSTEQRKRLTVAVELVANPSIIFMDEPTSGLDARAAAIVMRTVRNTVDTGRTVVCTIHQPSIDIFDAFDELLLLKRGGEEIYVGPLGRQSSHLIKYFEGIDGVPKIKDGYNPATWMLEITSVAQEGALGNDFTELYKNSELYRRNKALIKELSVPASCSKDLYFPTKYSQSFFTQCMACFWKQHWSYWRNPPYTAVRIMFTFFIALMFGTIFWDLGSRRERQQDLLNAIGSMYIAVLFLGVQNATTVQPVIAIERTVFYRERAAGMYSAMPYAFGQVMIELPYLFLQTIIYGVIVYAMIGFEWTVAKFFWYLFFMYFTLLYFTLYGMMTVAVTPNHSIAAIISSAFYAVWNLFCGFIVPKTRMPVWWRWYYYICPISWTLYGLIASQFGDIQDRLDTNETVEQFIENFFDFKHDFVGYVALILVGISVLFLFIFAFSIKTFNFQKR.

Residues 152–425 form the ABC transporter 1 domain; the sequence is LNYLHILPNR…FEYMGFICPE (274 aa). Residue 185-192 coordinates ATP; the sequence is GPPSSGKT. The ABC transmembrane type-2 1 domain maps to 504–716; that stretch reads LLKACTAREY…AQNAIAVNEF (213 aa). The next 7 membrane-spanning stretches (helical) occupy residues 521 to 541, 554 to 574, 609 to 629, 640 to 660, 664 to 684, 694 to 714, and 753 to 773; these read FVYI…MTLF, GAVF…NGFS, IPIT…VIGF, LLLL…MGAL, IIVA…MGGF, WWIW…IAVN, and IGAG…AVAL. The interval 808–830 is disordered; that stretch reads LGKSSSEKGNDVRRSASSRSMSS. Residues 812-821 are compositionally biased toward basic and acidic residues; the sequence is SSEKGNDVRR. Residues 855 to 1107 form the ABC transporter 2 domain; the sequence is ITFDDIRYAV…HLIKYFEGID (253 aa). 900–907 serves as a coordination point for ATP; sequence GVSGAGKT. In terms of domain architecture, ABC transmembrane type-2 2 spans 1180 to 1394; that stretch reads TQCMACFWKQ…TLYGLIASQF (215 aa). 7 consecutive transmembrane segments (helical) span residues 1199 to 1219, 1239 to 1259, 1287 to 1307, 1314 to 1334, 1344 to 1364, 1375 to 1395, and 1421 to 1441; these read YTAV…TIFW, YIAV…VIAI, LPYL…MIGF, FFWY…YGMM, IAAI…GFIV, WYYY…SQFG, and FVGY…FIFA.

The protein belongs to the ABC transporter superfamily. ABCG family. PDR (TC 3.A.1.205) subfamily. Expressed in root hypodermal passage cells. Expressed in stem tissues, particularly the vasculature and nodes adjacent to leaf axils.

The protein localises to the cell membrane. In terms of biological role, cellular strigolactone (SL) transporter required for the exudation of SL from the root to the soil. The presence of SL in the vicinity of the roots is required for development of symbiotic interactions with arbuscular mycorrhizal fungi (AMF). Transports SL in the above ground tissues and is required for the control of shoot branching. SL regulates plant shoot architecture by inhibiting the outgrowth of axillary buds. Involved in the regulation of shootward and outward directional strigolactone transport in roots. Due to its polar localization in root cells, mediates directional shootward strigolactone transport, as well as localized outward directional transport for exudation to the soil. The protein is Pleiotropic drug resistance protein 1 of Petunia axillaris (Large white petunia).